The following is a 492-amino-acid chain: 3-octaprenyl-4-hydroxybenzoate carboxy-lyase (492 aa).

Asn-177 contributes to the Mn(2+) binding site. Residues 180-182 (IYR), 194-196 (RWL), and 199-200 (RG) contribute to the prenylated FMN site. A Mn(2+)-binding site is contributed by Glu-243. Asp-292 (proton donor) is an active-site residue.

Belongs to the UbiD family. Homohexamer. It depends on prenylated FMN as a cofactor. Mn(2+) is required as a cofactor.

The protein localises to the cell membrane. The catalysed reaction is a 4-hydroxy-3-(all-trans-polyprenyl)benzoate + H(+) = a 2-(all-trans-polyprenyl)phenol + CO2. Its pathway is cofactor biosynthesis; ubiquinone biosynthesis. In terms of biological role, catalyzes the decarboxylation of 3-octaprenyl-4-hydroxy benzoate to 2-octaprenylphenol, an intermediate step in ubiquinone biosynthesis. The chain is 3-octaprenyl-4-hydroxybenzoate carboxy-lyase from Neisseria gonorrhoeae (strain ATCC 700825 / FA 1090).